Reading from the N-terminus, the 188-residue chain is Peptidyl-tRNA hydrolase (188 aa).

TRNA is bound at residue Y15. The active-site Proton acceptor is H20. Positions 63, 65, and 111 each coordinate tRNA.

This sequence belongs to the PTH family. As to quaternary structure, monomer.

The protein localises to the cytoplasm. The enzyme catalyses an N-acyl-L-alpha-aminoacyl-tRNA + H2O = an N-acyl-L-amino acid + a tRNA + H(+). Hydrolyzes ribosome-free peptidyl-tRNAs (with 1 or more amino acids incorporated), which drop off the ribosome during protein synthesis, or as a result of ribosome stalling. In terms of biological role, catalyzes the release of premature peptidyl moieties from peptidyl-tRNA molecules trapped in stalled 50S ribosomal subunits, and thus maintains levels of free tRNAs and 50S ribosomes. This Hydrogenobaculum sp. (strain Y04AAS1) protein is Peptidyl-tRNA hydrolase.